We begin with the raw amino-acid sequence, 291 residues long: Kidney mitochondrial carrier protein 1 (291 aa).

N-acetylserine is present on Ser2. 3 Solcar repeats span residues 7 to 96, 104 to 189, and 198 to 289; these read KPFV…LKRL, ETLP…TKKH, and DTVY…LKKL. 6 helical membrane passes run 9–26, 71–89, 105–124, 164–183, 204–224, and 264–283; these read FVYG…TFPI, GIAP…KIGT, TLPI…STIA, GVSL…LPVY, FLSS…VDVV, and GFWP…FVTY.

Belongs to the mitochondrial carrier (TC 2.A.29) family. Interacts with VDAC1.

The protein localises to the mitochondrion inner membrane. It carries out the reaction sulfite(in) + sulfate(out) = sulfite(out) + sulfate(in). The catalysed reaction is thiosulfate(in) + sulfate(out) = thiosulfate(out) + sulfate(in). The enzyme catalyses sulfate(out) + phosphate(in) = sulfate(in) + phosphate(out). It catalyses the reaction oxalate(in) + sulfate(out) = oxalate(out) + sulfate(in). It carries out the reaction malonate(in) + sulfate(out) = malonate(out) + sulfate(in). The catalysed reaction is maleate(in) + sulfate(out) = maleate(out) + sulfate(in). The enzyme catalyses (S)-malate(in) + sulfate(out) = (S)-malate(out) + sulfate(in). It catalyses the reaction (3S)-citramalate(in) + sulfate(out) = (3S)-citramalate(out) + sulfate(in). It carries out the reaction (3R)-citramalate(in) + sulfate(out) = (3R)-citramalate(out) + sulfate(in). The catalysed reaction is sulfate(out) + succinate(in) = sulfate(in) + succinate(out). The enzyme catalyses (S,S)-tartrate(in) + sulfate(out) = (S,S)-tartrate(out) + sulfate(in). It catalyses the reaction (2R,3R)-tartrate(in) + sulfate(out) = (2R,3R)-tartrate(out) + sulfate(in). It carries out the reaction D-aspartate(in) + sulfate(out) = D-aspartate(out) + sulfate(in). The catalysed reaction is L-aspartate(in) + sulfate(out) = L-aspartate(out) + sulfate(in). The enzyme catalyses sulfate(in) = sulfate(out). It catalyses the reaction phosphate(in) = phosphate(out). It carries out the reaction (S)-malate(out) = (S)-malate(in). Increased activity at pH 6.0. sulfate/sulfate exchange activity is inhibited strongly by pyridoxal 5'-phosphate, bathophenanthroline and the organic mercurials mersalyl, p-chloromercuribenzoate and HgCl2. Functionally, antiporter that transports inorganic anions (sulfate, sulfite, thiosulfate and phosphate) and, to a lesser extent, a variety of dicarboxylates (e.g. malonate, malate and citramalate) and, even more so, aspartate. The sulfate/sulfate exchange is much higher than the phosphate/phosphate and malate/malate exchanges. The transport affinities is higher for sulfate and thiosulfate than for any other substrate. May catalyze the export of sulfite and thiosulfate (the hydrogen sulfide degradation products) from the mitochondria, thereby modulating the level of the hydrogen sulfide. Also may mediate a very low unidirectional transport of sulfate, phosphate and (S)-malate. The sequence is that of Kidney mitochondrial carrier protein 1 from Homo sapiens (Human).